A 369-amino-acid polypeptide reads, in one-letter code: Coiled-coil domain-containing protein 149 (369 aa).

Positions 1 to 249 (MKENNNAEIL…AKYKQMAEAV (249 aa)) form a coiled coil.

It belongs to the CCDC149 family. In terms of tissue distribution, expressed in amphid and phasmid ciliated neurons, and also pharyngeal, touch receptor and motor neurons.

It localises to the cell projection. The protein resides in the cilium. This chain is Coiled-coil domain-containing protein 149, found in Caenorhabditis elegans.